The chain runs to 89 residues: Small ribosomal subunit protein uS17 (89 aa).

This sequence belongs to the universal ribosomal protein uS17 family. In terms of assembly, part of the 30S ribosomal subunit.

Functionally, one of the primary rRNA binding proteins, it binds specifically to the 5'-end of 16S ribosomal RNA. The protein is Small ribosomal subunit protein uS17 of Baumannia cicadellinicola subsp. Homalodisca coagulata.